A 90-amino-acid chain; its full sequence is Progonadoliberin-1 (90 aa).

An N-terminal signal peptide occupies residues 1–24 (MSRHVTVVLLLAIVLLLSSHMIHG). Pyrrolidone carboxylic acid is present on Gln25. The residue at position 34 (Gly34) is a Glycine amide.

This sequence belongs to the GnRH family. Forebrain.

The protein localises to the secreted. In terms of biological role, stimulates the secretion of gonadotropins. The chain is Progonadoliberin-1 (gnrh1) from Aquarana catesbeiana (American bullfrog).